The primary structure comprises 88 residues: Large ribosomal subunit protein bL31B (88 aa).

The protein belongs to the bacterial ribosomal protein bL31 family. Type B subfamily. As to quaternary structure, part of the 50S ribosomal subunit.

The polypeptide is Large ribosomal subunit protein bL31B (Leuconostoc citreum (strain KM20)).